Here is a 232-residue protein sequence, read N- to C-terminus: tRNA (guanine-N(1)-)-methyltransferase (232 aa).

Position 116 (glycine 116) interacts with S-adenosyl-L-methionine.

Belongs to the RNA methyltransferase TrmD family. As to quaternary structure, homodimer.

The protein resides in the cytoplasm. It carries out the reaction guanosine(37) in tRNA + S-adenosyl-L-methionine = N(1)-methylguanosine(37) in tRNA + S-adenosyl-L-homocysteine + H(+). Its function is as follows. Specifically methylates guanosine-37 in various tRNAs. In Chlorobium luteolum (strain DSM 273 / BCRC 81028 / 2530) (Pelodictyon luteolum), this protein is tRNA (guanine-N(1)-)-methyltransferase.